A 176-amino-acid chain; its full sequence is Translation initiation factor IF-3 (176 aa).

It belongs to the IF-3 family. Monomer.

Its subcellular location is the cytoplasm. IF-3 binds to the 30S ribosomal subunit and shifts the equilibrium between 70S ribosomes and their 50S and 30S subunits in favor of the free subunits, thus enhancing the availability of 30S subunits on which protein synthesis initiation begins. The chain is Translation initiation factor IF-3 from Streptococcus pyogenes serotype M18 (strain MGAS8232).